Consider the following 309-residue polypeptide: Taste receptor type 2 member 114 (309 aa).

At 1–7 (MLGAMEG) the chain is on the extracellular side. A helical transmembrane segment spans residues 8-28 (VLLSVATSEALLGIVGNTFIA). Residues 29 to 43 (LVNCMDCTRNKNLYN) lie on the Cytoplasmic side of the membrane. The chain crosses the membrane as a helical span at residues 44–64 (IGFILTGLAISRICLVWILIT). Residues 65–87 (EAYIKIFSPQLLSPINIIELISY) lie on the Extracellular side of the membrane. A helical transmembrane segment spans residues 88-108 (LWIITSQLNVWFATSLSIFYF). At 109–127 (LKIANFSHHIFLWLKRRIN) the chain is on the cytoplasmic side. A helical membrane pass occupies residues 128-148 (IVFAFLIGCLLMSWLFSFPVV). Residues 149-182 (VKMVKDKKMLYINSSWQIHMKKSELIINYVFTNG) are Extracellular-facing. The N-linked (GlcNAc...) asparagine glycan is linked to asparagine 161. A helical transmembrane segment spans residues 183 to 203 (GVFLLFIIMLIVCFLLIISLW). At 204–233 (RHSKWMQSNESGFRDLNTEVHVKTIKVLLS) the chain is on the cytoplasmic side. A helical membrane pass occupies residues 234 to 254 (FIILFILHLIGITINVICLLV). At 255–259 (PENNL) the chain is on the extracellular side. Residues 260-280 (LFVFGLTIAFLYPCCHSLILI) form a helical membrane-spanning segment. The Cytoplasmic segment spans residues 281-309 (LANSRLKRCFVRILQQLMCSEEGKEFRNT).

This sequence belongs to the G-protein coupled receptor T2R family.

The protein resides in the membrane. In terms of biological role, putative taste receptor which may play a role in the perception of bitterness. This chain is Taste receptor type 2 member 114, found in Rattus norvegicus (Rat).